Consider the following 499-residue polypeptide: ATP synthase subunit alpha, chloroplastic (499 aa).

170-177 contacts ATP; the sequence is GDRQTGKT.

The protein belongs to the ATPase alpha/beta chains family. As to quaternary structure, F-type ATPases have 2 components, CF(1) - the catalytic core - and CF(0) - the membrane proton channel. CF(1) has five subunits: alpha(3), beta(3), gamma(1), delta(1), epsilon(1). CF(0) has four main subunits: a, b, b' and c.

The protein resides in the plastid. Its subcellular location is the chloroplast thylakoid membrane. The catalysed reaction is ATP + H2O + 4 H(+)(in) = ADP + phosphate + 5 H(+)(out). In terms of biological role, produces ATP from ADP in the presence of a proton gradient across the membrane. The alpha chain is a regulatory subunit. In Emiliania huxleyi (Coccolithophore), this protein is ATP synthase subunit alpha, chloroplastic.